The sequence spans 62 residues: 2-hydroxymuconate tautomerase (62 aa).

Pro-2 (proton acceptor; via imino nitrogen) is an active-site residue. Residue 9–12 (LEGR) coordinates substrate.

Belongs to the 4-oxalocrotonate tautomerase family. Homohexamer.

The enzyme catalyses (2Z,4E)-2-hydroxyhexa-2,4-dienedioate = (3E)-2-oxohex-3-enedioate. In terms of biological role, catalyzes both 1,3- and 1,5-keto-enol tautomerization of the diacid 2-hydroxymuconate (2-hydroxy-2,4-hexadienedioate) to produce 2-oxo-4-hexenedioate. This reaction is highly stereoselective and produces a mixture of stereoisomers, where the (3S)-isomer of 2-oxo-4-hexenedioate predominates. Also catalyzes the tautomerization of 2-hydroxymuconate to 2-oxo-3-hexenedioate, however this reaction is slower and occurs after the tautomerization of 2-hydroxymuconate to 2-oxo-4-hexenedioate. Using 2-hydroxy-2,4-pentadienoate, phenylenolpyruvate, (p-hydroxyphenyl)-enolpyruvate and 2-hydroxy-2,4-heptadiene-1,7-dioate, YwhB is a highly efficient 1,3-keto-enol tautomerase, but clearly not a 1,5-keto-enol tautomerase. Tautomerization of the two monoacids 2-hydroxy-2,4-pentadienoate and phenylenolpyruvate produces a mixture of stereoisomers, where the (3R)-isomers predominate. The sequence is that of 2-hydroxymuconate tautomerase (ywhB) from Bacillus subtilis (strain 168).